Reading from the N-terminus, the 956-residue chain is MSLPSRQTAIVNPPPPEYINTKKSGRLTNQLQFLQRVVLKALWKHGFSWPFQQPVDAVKLKLPDYYTIIKTPMDLNTIKKRLENKYYEKASECIEDFNTMFSNCYLYNKTGDDIVVMAQALEKLFMQKLSQMPQEEQVVGGKERIKKDIQQKIAVSSAKEQIPSKAAENVFKRQEIPSGLPDISLSPLNMAQEAPPICDSQSLVQITKGVKRRADTTTPTTSIAKASSESPPTLRETKPVNMPVKENTVKNVLPDSQQQHKVLKTVKVTEQLKHCSEILKEMLAKKHLPYAWPFYNPVDADALGLHNYYDVVKNPMDLGTIKGKMDNQEYKDAYEFAADVRLMFMNCYKYNPPDHEVVAMARTLQDVFELHFAKIPDEPIESMHACHLTTNSAQALSRESSSEASSGDASSEDSEDERVQHLAKLQEQLNAVHQQLQVLSQVPLRKLKKKNEKSKRAPKRKKVNNRDENPRKKPKQMKQKEKAKINQPKKKKPLLKSEEEDNAKPMNYDEKRQLSLDINKLPGDKLGRIVHIIQSREPSLRNSNPDEIEIDFETLKASTLRELEKYVLACLRKRSLKPQAKKVVRSKEELHSEKKLELERRLLDVNNQLNCRKRQTKRPAKVEKPPPPPPPPPPPPPPPELASGSRLTDSSSSSGSGSGSSSSSSGSSSSSSSSGSASSSSDSSSSDSSDSEPEIFPKFTGVKQNDLPPKENIKQIQSSVQDITSAEAPLAQQSTAPCGAPGKHSQQMLGCQVTQHLQATENTASVQTQPLSGDCKRVLLGPPVVHTSAESLTVLEPECHAPAQKDIKIKNADSWKSLGKPVKASSVLKSSDELFNQFRKAAIEKEVKARTQEQMRKHLEHNAKDPKVSQENQREPGSGLTLESLSSKVQDKSLEEDQSEQQPPSEAQDVSKLWLLKDRNLAREKEQERRRREAMAGTIDMTLQSDIMTMFENNFD.

The 107-residue stretch at 26–132 (RLTNQLQFLQ…KLFMQKLSQM (107 aa)) folds into the Bromo 1 domain. At Ser186 the chain carries Phosphoserine. Residues 208–219 (KGVKRRADTTTP) carry the Nuclear localization signal motif. Residues 210 to 239 (VKRRADTTTPTTSIAKASSESPPTLRETKP) are disordered. Positions 216–231 (TTTPTTSIAKASSESP) are enriched in polar residues. Residues 266-375 (VKVTEQLKHC…DVFELHFAKI (110 aa)) form the Bromo 2 domain. Disordered stretches follow at residues 391-420 (NSAQ…ERVQ), 442-508 (VPLR…PMNY), 607-747 (NQLN…HSQQ), and 859-934 (LEHN…RREA). The segment covering 392-409 (SAQALSRESSSEASSGDA) has biased composition (low complexity). A coiled-coil region spans residues 417–442 (ERVQHLAKLQEQLNAVHQQLQVLSQV). Positions 445 to 463 (RKLKKKNEKSKRAPKRKKV) are enriched in basic residues. In terms of domain architecture, NET spans 496–578 (KSEEEDNAKP…ACLRKRSLKP (83 aa)). A compositionally biased stretch (pro residues) spans 625 to 640 (PPPPPPPPPPPPPPPE). A compositionally biased stretch (low complexity) spans 649–688 (DSSSSSGSGSGSSSSSSGSSSSSSSSGSASSSSDSSSSDS). Residues 714 to 724 (KQIQSSVQDIT) show a composition bias toward polar residues. Residues 844 to 940 (EKEVKARTQE…RREAMAGTID (97 aa)) adopt a coiled-coil conformation. 2 stretches are compositionally biased toward basic and acidic residues: residues 859–874 (LEHN…ENQR) and 915–934 (LLKD…RREA).

This sequence belongs to the BET family. In terms of assembly, interacts with SMARCE1. Interacts with mRNA splicing machinery proteins SRSF2, DDX5, HNRNPK and TARDBP. Interacts with the acetylated N-terminus of histone H1, H2, H3 and H4. Interacts with P-TEFb components CDK9 and CCNT1/cyclin-T1. In terms of processing, ubiquitinated in a SPOP-dependent manner, leading to proteasomal degradation. As to expression, testis-specific. Expressed in germinal cells from the early meiotic (pachytene) spermatocytes and during spermiogenesis in the round and elongating spermatids until the condensed late spermatids. No expression seen in spermatogonia.

The protein localises to the nucleus. Its function is as follows. Testis-specific chromatin protein that specifically binds histone H4 acetylated at 'Lys-5' and 'Lys-8' (H4K5ac and H4K8ac, respectively) and plays a key role in spermatogenesis. Required in late pachytene spermatocytes: plays a role in meiotic and post-meiotic cells by binding to acetylated histones at the promoter of specific meiotic and post-meiotic genes, facilitating their activation at the appropriate time. In the post-meiotic phase of spermatogenesis, binds to hyperacetylated histones and participates in their general removal from DNA. Also recognizes and binds a subset of butyrylated histones: able to bind histone H4 butyrylated at 'Lys-8' (H4K8ac), while it is not able to bind H4 butyrylated at 'Lys-5' (H4K5ac). Also acts as a component of the splicing machinery in pachytene spermatocytes and round spermatids and participates in 3'-UTR truncation of specific mRNAs in post-meiotic spermatids. Required for chromocenter organization, a structure comprised of peri-centromeric heterochromatin. The protein is Bromodomain testis-specific protein (Brdt) of Mus musculus (Mouse).